The primary structure comprises 246 residues: Ribonuclease PH (246 aa).

Residues Arg91 and 129–131 (GTR) contribute to the phosphate site.

Belongs to the RNase PH family. Homohexameric ring arranged as a trimer of dimers.

It catalyses the reaction tRNA(n+1) + phosphate = tRNA(n) + a ribonucleoside 5'-diphosphate. Its function is as follows. Phosphorolytic 3'-5' exoribonuclease that plays an important role in tRNA 3'-end maturation. Removes nucleotide residues following the 3'-CCA terminus of tRNAs; can also add nucleotides to the ends of RNA molecules by using nucleoside diphosphates as substrates, but this may not be physiologically important. Probably plays a role in initiation of 16S rRNA degradation (leading to ribosome degradation) during starvation. The chain is Ribonuclease PH from Paraburkholderia phymatum (strain DSM 17167 / CIP 108236 / LMG 21445 / STM815) (Burkholderia phymatum).